The sequence spans 232 residues: dITP/XTP pyrophosphatase (232 aa).

10-15 is a substrate binding site; it reads TRNKGK. The Proton acceptor role is filled by aspartate 72. Aspartate 72 contacts Mg(2+). Residues serine 73, 153–156, lysine 176, and 181–182 contribute to the substrate site; these read FGYD and HR.

It belongs to the HAM1 NTPase family. As to quaternary structure, homodimer. The cofactor is Mg(2+).

It carries out the reaction XTP + H2O = XMP + diphosphate + H(+). It catalyses the reaction dITP + H2O = dIMP + diphosphate + H(+). The enzyme catalyses ITP + H2O = IMP + diphosphate + H(+). Functionally, pyrophosphatase that catalyzes the hydrolysis of nucleoside triphosphates to their monophosphate derivatives, with a high preference for the non-canonical purine nucleotides XTP (xanthosine triphosphate), dITP (deoxyinosine triphosphate) and ITP. Seems to function as a house-cleaning enzyme that removes non-canonical purine nucleotides from the nucleotide pool, thus preventing their incorporation into DNA/RNA and avoiding chromosomal lesions. The protein is dITP/XTP pyrophosphatase of Syntrophobacter fumaroxidans (strain DSM 10017 / MPOB).